We begin with the raw amino-acid sequence, 185 residues long: ATP synthase subunit b, chloroplastic (185 aa).

Residues 7 to 29 traverse the membrane as a helical segment; it reads SFVYLVGHCPFAGSFAFNTDILA.

It belongs to the ATPase B chain family. As to quaternary structure, F-type ATPases have 2 components, F(1) - the catalytic core - and F(0) - the membrane proton channel. F(1) has five subunits: alpha(3), beta(3), gamma(1), delta(1), epsilon(1). F(0) has four main subunits: a(1), b(1), b'(1) and c(10-14). The alpha and beta chains form an alternating ring which encloses part of the gamma chain. F(1) is attached to F(0) by a central stalk formed by the gamma and epsilon chains, while a peripheral stalk is formed by the delta, b and b' chains.

It localises to the plastid. Its subcellular location is the chloroplast thylakoid membrane. Functionally, f(1)F(0) ATP synthase produces ATP from ADP in the presence of a proton or sodium gradient. F-type ATPases consist of two structural domains, F(1) containing the extramembraneous catalytic core and F(0) containing the membrane proton channel, linked together by a central stalk and a peripheral stalk. During catalysis, ATP synthesis in the catalytic domain of F(1) is coupled via a rotary mechanism of the central stalk subunits to proton translocation. Its function is as follows. Component of the F(0) channel, it forms part of the peripheral stalk, linking F(1) to F(0). The sequence is that of ATP synthase subunit b, chloroplastic from Dioscorea elephantipes (Elephant's foot yam).